The primary structure comprises 393 residues: MGVLGLSKLLYDRTPGAIKEQELKVYFGRRIAIDASMAVYQFVIAMKGFQEGQSVELTNEAGDVTSHLSGIFFRTLRMIDEGLRPIYVFDGKPPTLKASELESRRQRAEDAKHEFEKAKEEGDDEAMEKMSKRMVRVGRDQMEEVKTLLRLMGIPVVQAPSEAEAQCAELVKKNKAWAVGTEDMDALAFGSRVMLRHLTYGEAKKRPIAEYHLDEILEASGFSMQQFIDLCILLGCDYVPRISGIGPHKAWEGIKKYGSLEAFIESLDGTRYVVPEEFNYKDARNFFLEPEVTPGEEIDIQFREPDEEGLIKFLVDEKLFSKERVLKGIQRLRDALTKKTQGRLDQFFTITKPQKQVNSEASTAGTKRNRGAVALPGVLQRKSSSGHKKAVKK.

The segment at 1 to 108 (MGVLGLSKLL…SELESRRQRA (108 aa)) is N-domain. Position 34 (Asp-34) interacts with Mg(2+). Residue Arg-74 participates in DNA binding. Asp-90 contributes to the Mg(2+) binding site. Positions 99–120 (SELESRRQRAEDAKHEFEKAKE) are enriched in basic and acidic residues. Residues 99–127 (SELESRRQRAEDAKHEFEKAKEEGDDEAM) are disordered. The segment at 126 to 257 (AMEKMSKRMV…HKAWEGIKKY (132 aa)) is I-domain. Positions 162, 164, 183, and 185 each coordinate Mg(2+). Glu-162 lines the DNA pocket. Positions 235 and 237 each coordinate DNA. Asp-237 contributes to the Mg(2+) binding site. An interaction with PCNA region spans residues 340 to 348 (TQGRLDQFF). Residues 358 to 393 (NSEASTAGTKRNRGAVALPGVLQRKSSSGHKKAVKK) form a disordered region. A compositionally biased stretch (basic residues) spans 384 to 393 (SSGHKKAVKK).

The protein belongs to the XPG/RAD2 endonuclease family. FEN1 subfamily. As to quaternary structure, interacts with PCNA. Three molecules of FEN1 bind to one PCNA trimer with each molecule binding to one PCNA monomer. PCNA stimulates the nuclease activity without altering cleavage specificity. It depends on Mg(2+) as a cofactor. Phosphorylated. Phosphorylation upon DNA damage induces relocalization to the nuclear plasma.

It localises to the nucleus. The protein resides in the nucleolus. It is found in the nucleoplasm. Its subcellular location is the mitochondrion. In terms of biological role, structure-specific nuclease with 5'-flap endonuclease and 5'-3' exonuclease activities involved in DNA replication and repair. During DNA replication, cleaves the 5'-overhanging flap structure that is generated by displacement synthesis when DNA polymerase encounters the 5'-end of a downstream Okazaki fragment. It enters the flap from the 5'-end and then tracks to cleave the flap base, leaving a nick for ligation. Also involved in the long patch base excision repair (LP-BER) pathway, by cleaving within the apurinic/apyrimidinic (AP) site-terminated flap. Acts as a genome stabilization factor that prevents flaps from equilibrating into structures that lead to duplications and deletions. Also possesses 5'-3' exonuclease activity on nicked or gapped double-stranded DNA, and exhibits RNase H activity. Also involved in replication and repair of rDNA and in repairing mitochondrial DNA. This chain is Flap endonuclease 1, found in Trypanosoma brucei brucei (strain 927/4 GUTat10.1).